Consider the following 182-residue polypeptide: Protein Syd (182 aa).

Belongs to the Syd family.

It is found in the cell inner membrane. Its function is as follows. Interacts with the SecY protein in vivo. May bind preferentially to an uncomplexed state of SecY, thus functioning either as a chelating agent for excess SecY in the cell or as a regulatory factor that negatively controls the translocase function. The protein is Protein Syd of Aeromonas salmonicida (strain A449).